The following is a 270-amino-acid chain: 4-hydroxy-tetrahydrodipicolinate reductase (270 aa).

NAD(+) is bound by residues 9–14 (GAGGRM) and E35. NADP(+) is bound at residue R36. NAD(+)-binding positions include 99 to 101 (GTT) and 123 to 126 (ASNF). The active-site Proton donor/acceptor is the H156. H157 is a (S)-2,3,4,5-tetrahydrodipicolinate binding site. Catalysis depends on K160, which acts as the Proton donor. 166-167 (GT) contacts (S)-2,3,4,5-tetrahydrodipicolinate.

It belongs to the DapB family.

The protein resides in the cytoplasm. The catalysed reaction is (S)-2,3,4,5-tetrahydrodipicolinate + NAD(+) + H2O = (2S,4S)-4-hydroxy-2,3,4,5-tetrahydrodipicolinate + NADH + H(+). It catalyses the reaction (S)-2,3,4,5-tetrahydrodipicolinate + NADP(+) + H2O = (2S,4S)-4-hydroxy-2,3,4,5-tetrahydrodipicolinate + NADPH + H(+). The protein operates within amino-acid biosynthesis; L-lysine biosynthesis via DAP pathway; (S)-tetrahydrodipicolinate from L-aspartate: step 4/4. Its function is as follows. Catalyzes the conversion of 4-hydroxy-tetrahydrodipicolinate (HTPA) to tetrahydrodipicolinate. This is 4-hydroxy-tetrahydrodipicolinate reductase from Haemophilus influenzae (strain 86-028NP).